We begin with the raw amino-acid sequence, 168 residues long: Phosphopantetheine adenylyltransferase (168 aa).

Residue Thr-13 participates in substrate binding. ATP is bound by residues 13–14 (TF) and His-21. Substrate contacts are provided by Lys-45, Leu-78, and Arg-92. ATP-binding positions include 93–95 (GLR), Glu-103, and 128–134 (TQFISSS).

The protein belongs to the bacterial CoaD family. Homohexamer. Mg(2+) is required as a cofactor.

Its subcellular location is the cytoplasm. The catalysed reaction is (R)-4'-phosphopantetheine + ATP + H(+) = 3'-dephospho-CoA + diphosphate. The protein operates within cofactor biosynthesis; coenzyme A biosynthesis; CoA from (R)-pantothenate: step 4/5. Reversibly transfers an adenylyl group from ATP to 4'-phosphopantetheine, yielding dephospho-CoA (dPCoA) and pyrophosphate. This Wolbachia pipientis wMel protein is Phosphopantetheine adenylyltransferase.